The sequence spans 201 residues: MQELAPRQQQVLAFITGFIAENGYPPTLREIAAHLKISGTLGVSKHLEALERKGYLRREANSSRGIALVGRTDTALSLPVAGVVRAGLPQPAVEDIEEYFAIDRSMVRGGTFFLRVKGDSMINAAIVEGDLALVRPQATAENRDIVVAMVDGEATLKRFYRQRDQIRLQPENPNMDPIIIRPGEGDVAIIGKVVGIYRPLE.

The segment at residues 28 to 48 is a DNA-binding region (H-T-H motif); the sequence is LREIAAHLKISGTLGVSKHLE. Residues Ser120 and Lys157 each act as for autocatalytic cleavage activity in the active site.

The protein belongs to the peptidase S24 family. In terms of assembly, homodimer.

The catalysed reaction is Hydrolysis of Ala-|-Gly bond in repressor LexA.. Represses a number of genes involved in the response to DNA damage (SOS response), including recA and lexA. In the presence of single-stranded DNA, RecA interacts with LexA causing an autocatalytic cleavage which disrupts the DNA-binding part of LexA, leading to derepression of the SOS regulon and eventually DNA repair. The polypeptide is LexA repressor 1 (Geobacter sulfurreducens (strain ATCC 51573 / DSM 12127 / PCA)).